Here is a 110-residue protein sequence, read N- to C-terminus: VIGDEDTVTGFLLGGIGELNKNRKPNFLVVEKETSVTEIEETFRSFLNRDDIGIILINQFIAEMIRHVIDTHTISIPAVLEIPSKEHPYDATKDSILRRAKGMFTMEDLR.

It belongs to the V-ATPase F subunit family. In terms of assembly, V-ATPase is a heteromultimeric enzyme made up of two complexes: the ATP-hydrolytic V1 complex and the proton translocation V0 complex. The V1 complex consists of three catalytic AB heterodimers that form a heterohexamer, three peripheral stalks each consisting of EG heterodimers, one central rotor including subunits D and F, and the regulatory subunits C and H. The proton translocation complex V0 consists of the proton transport subunit a, a ring of proteolipid subunits c9c'', rotary subunit d, subunits e and f, and two accessory subunits.

Subunit of the V1 complex of vacuolar(H+)-ATPase (V-ATPase), a multisubunit enzyme composed of a peripheral complex (V1) that hydrolyzes ATP and a membrane integral complex (V0) that translocates protons. V-ATPase is responsible for acidifying and maintaining the pH of intracellular compartments and in some cell types, is targeted to the plasma membrane, where it is responsible for acidifying the extracellular environment. The sequence is that of V-type proton ATPase subunit F (atp6s14) from Xenopus laevis (African clawed frog).